The following is a 169-amino-acid chain: Styrene-oxide isomerase (169 aa).

Helical transmembrane passes span 13–33 (GILMIFCTLLFGVGLWMHLVG), 61–81 (PALNGMMVIAVAFVLPSLGFA), 85–105 (PHLLGNIIILDGWANVGFYFF), and 129–149 (FLALAPAYLFGVLAMGALAVI).

The protein localises to the membrane. The enzyme catalyses styrene oxide = 2-phenylacetaldehyde. Its pathway is aromatic compound metabolism. Epoxystyrene isomerase that catalyzes the second step in the aerobic styrene degradation pathway by converting epoxystyrene to phenylacetaldehyde. This is Styrene-oxide isomerase (styC) from Pseudomonas fluorescens.